The following is a 410-amino-acid chain: Maintenance of mitochondrial morphology protein 1 (410 aa).

Residues Met1 to Gly19 lie on the Lumenal side of the membrane. A helical membrane pass occupies residues Leu20–Phe40. The Cytoplasmic segment spans residues Gly41 to Asp410. The span at Leu71 to Leu87 shows a compositional bias: polar residues. The interval Leu71–Gly98 is disordered. The SMP-LTD domain maps to Gln119–Pro335. Residues Ala380–Asp410 are disordered. Positions Asp387–Asp398 are enriched in basic and acidic residues.

Belongs to the MMM1 family. Homodimer. Component of the ER-mitochondria encounter structure (ERMES) or MDM complex, composed of MMM1, MDM10, MDM12 and MDM34. An MMM1 homodimer associates with one molecule of MDM12 on each side in a pairwise head-to-tail manner, and the SMP-LTD domains of MMM1 and MDM12 generate a continuous hydrophobic tunnel for phospholipid trafficking.

It localises to the endoplasmic reticulum membrane. Functionally, component of the ERMES/MDM complex, which serves as a molecular tether to connect the endoplasmic reticulum (ER) and mitochondria. Components of this complex are involved in the control of mitochondrial shape and protein biogenesis, and function in nonvesicular lipid trafficking between the ER and mitochondria. The MDM12-MMM1 subcomplex functions in the major beta-barrel assembly pathway that is responsible for biogenesis of all outer membrane beta-barrel proteins, and acts in a late step after the SAM complex. The MDM10-MDM12-MMM1 subcomplex further acts in the TOM40-specific pathway after the action of the MDM12-MMM1 complex. Essential for establishing and maintaining the structure of mitochondria and maintenance of mtDNA nucleoids. The chain is Maintenance of mitochondrial morphology protein 1 from Pyricularia oryzae (strain 70-15 / ATCC MYA-4617 / FGSC 8958) (Rice blast fungus).